The primary structure comprises 486 residues: MNAPEPVQGKPRKRYDAGVMKYKEMGYWDADYEPKDTDLLALFRITPQDGVDPVEAAAAVAGESSTATWTVVWTDRLTACDMYRAKAYRVDPVPNNPEQFFCYVAYDLSLFEEGSIANLTASIIGNVFSFKPIKAARLEDMRFPVAYVKTFAGPSTGIIVERERLDKFGRPLLGATTKPKLGLSGRNYGRVVYEGLKGGLDFMKDDENINSQPFMHWRDRFLFVMDAVNKASAATGEVKGSYLNVTAGTMEEMYRRAEFAKSLGSVIIMVDLIVGWTCIQSMSNWCRQNDMILHLHRAGHGTYTRQKNHGVSFRVIAKWLRLAGVDHMHTGTAVGKLEGDPLTVQGYYNVCRDAYTRTDLTRGLFFDQDWASLRKVMPVASGGIHAGQMHQLISLFGDDVVLQFGGGTIGHPQGIQAGATANRVALEAMVLARNEGRDILNEGPEILRDAARWCGPLRAALDTWGDITFNYTPTDTSDFVPTASVA.

Residues asparagine 126 and threonine 176 each contribute to the substrate site. Lysine 178 functions as the Proton acceptor in the catalytic mechanism. Residue lysine 180 participates in substrate binding. Positions 204, 206, and 207 each coordinate Mg(2+). An N6-carboxylysine modification is found at lysine 204. Histidine 296 functions as the Proton acceptor in the catalytic mechanism. Substrate-binding residues include arginine 297, histidine 329, and serine 381.

This sequence belongs to the RuBisCO large chain family. Type I subfamily. In terms of assembly, heterohexadecamer of 8 large chains and 8 small chains. Mg(2+) is required as a cofactor.

It catalyses the reaction 2 (2R)-3-phosphoglycerate + 2 H(+) = D-ribulose 1,5-bisphosphate + CO2 + H2O. The catalysed reaction is D-ribulose 1,5-bisphosphate + O2 = 2-phosphoglycolate + (2R)-3-phosphoglycerate + 2 H(+). Functionally, ruBisCO catalyzes two reactions: the carboxylation of D-ribulose 1,5-bisphosphate, the primary event in carbon dioxide fixation, as well as the oxidative fragmentation of the pentose substrate. Both reactions occur simultaneously and in competition at the same active site. The chain is Ribulose bisphosphate carboxylase large chain from Cupriavidus taiwanensis (strain DSM 17343 / BCRC 17206 / CCUG 44338 / CIP 107171 / LMG 19424 / R1) (Ralstonia taiwanensis (strain LMG 19424)).